Reading from the N-terminus, the 283-residue chain is MKILDGKAVSLKVKESVKVRADELKKFGVEPTLAVVLVGEDKASQTYVRAKEKACNEYGIKSVAHRLSENTTQNELLALINVLNLDDSIHGILVQLPLPKHIDTNVVLAAIDPRKDVDGFHAVNVGKLVSGLDGFVPCTPLGVMEILKEYGIEVAGLNAVVIGRSNIVGKPMANLLLNASATVTVTHSKTKNLKEICKNADLIVAAIGKPFFLKADMVKDGAVVVDVGINRLDDGRLVGDVDFDEVAPKCSYITPVPGGVGPMTIAMLLNNTILAAQAKIAKN.

NADP(+)-binding positions include 163 to 165, Ser188, and Ile229; that span reads GRS.

It belongs to the tetrahydrofolate dehydrogenase/cyclohydrolase family. Homodimer.

The enzyme catalyses (6R)-5,10-methylene-5,6,7,8-tetrahydrofolate + NADP(+) = (6R)-5,10-methenyltetrahydrofolate + NADPH. It catalyses the reaction (6R)-5,10-methenyltetrahydrofolate + H2O = (6R)-10-formyltetrahydrofolate + H(+). The protein operates within one-carbon metabolism; tetrahydrofolate interconversion. Its function is as follows. Catalyzes the oxidation of 5,10-methylenetetrahydrofolate to 5,10-methenyltetrahydrofolate and then the hydrolysis of 5,10-methenyltetrahydrofolate to 10-formyltetrahydrofolate. The polypeptide is Bifunctional protein FolD (Campylobacter concisus (strain 13826)).